Reading from the N-terminus, the 66-residue chain is Beta-toxin ChFII.9 (66 aa).

In terms of domain architecture, LCN-type CS-alpha/beta spans 1-66 (KEGYIVDYHT…VWPLPNKRCK (66 aa)). Disulfide bonds link C12–C65, C16–C41, C25–C46, and C29–C48. Residue K66 is modified to Lysine amide.

As to expression, expressed by the venom gland.

It is found in the secreted. In terms of biological role, beta toxins bind voltage independently at site-4 of sodium channels (Nav) and shift the activation voltage toward more negative potentials, thereby affecting sodium channel activation CC and promoting spontaneous and repetitive firing. This chain is Beta-toxin ChFII.9, found in Centruroides hirsutipalpus (Scorpion).